Here is a 211-residue protein sequence, read N- to C-terminus: Probable GTP-binding protein EngB (211 aa).

Positions 22–195 (PFPEVAFAGK…WQLIDSYVLP (174 aa)) constitute an EngB-type G domain. Residues 30-37 (GKSNVGKS), 57-61 (GKTQT), 75-78 (DLPG), 142-145 (TKLD), and 174-176 (FSS) contribute to the GTP site. Mg(2+) is bound by residues Ser-37 and Thr-59.

Belongs to the TRAFAC class TrmE-Era-EngA-EngB-Septin-like GTPase superfamily. EngB GTPase family. The cofactor is Mg(2+).

In terms of biological role, necessary for normal cell division and for the maintenance of normal septation. This Lachnospira eligens (strain ATCC 27750 / DSM 3376 / VPI C15-48 / C15-B4) (Eubacterium eligens) protein is Probable GTP-binding protein EngB.